Consider the following 118-residue polypeptide: MQKELLEVFDNRFPDRDYTIEIVNPEFTSVCPITGLPDFGTITIRYIPDKVCVELKSLKYYYLEFRNAGIFYENVTNTILDHLVDLLKPRTLTVTTAWKARGGITETVTVSYSAGQDE.

The Thioimide intermediate role is filled by C31. D38 serves as the catalytic Proton donor. Substrate is bound by residues 53–55 (VEL) and 72–73 (YE).

This sequence belongs to the GTP cyclohydrolase I family. QueF type 1 subfamily.

It is found in the cytoplasm. It carries out the reaction 7-aminomethyl-7-carbaguanine + 2 NADP(+) = 7-cyano-7-deazaguanine + 2 NADPH + 3 H(+). Its pathway is tRNA modification; tRNA-queuosine biosynthesis. Catalyzes the NADPH-dependent reduction of 7-cyano-7-deazaguanine (preQ0) to 7-aminomethyl-7-deazaguanine (preQ1). The sequence is that of NADPH-dependent 7-cyano-7-deazaguanine reductase from Chlorobium phaeobacteroides (strain BS1).